The chain runs to 137 residues: Putative pre-16S rRNA nuclease (137 aa).

It belongs to the YqgF nuclease family.

Its subcellular location is the cytoplasm. Functionally, could be a nuclease involved in processing of the 5'-end of pre-16S rRNA. In Clostridium kluyveri (strain NBRC 12016), this protein is Putative pre-16S rRNA nuclease.